Consider the following 310-residue polypeptide: U-megalopygitoxin(8)-Mo15 (310 aa).

The first 27 residues, 1–27, serve as a signal peptide directing secretion; that stretch reads MARFSSKNLTKLFQYLVLSLLSPVAFG.

It belongs to the megalysin family. Post-translationally, contains 3 disulfide bonds. Expressed by the venom apparatus.

The protein localises to the secreted. Its subcellular location is the target cell membrane. In terms of biological role, may function as a large pore-forming protein. This Megalopyge opercularis (Southern flannel moth) protein is U-megalopygitoxin(8)-Mo15.